Consider the following 168-residue polypeptide: Protein GRIM REAPER (168 aa).

The first 30 residues, 1–30 (MVIKIPNTFIKATSLLSLILYFLIIATSKS), serve as a signal peptide directing secretion. N-linked (GlcNAc...) asparagine glycosylation occurs at Asn59.

Belongs to the STIG1 family. Interacts with PRK5 and to a lower extent with PRK4. In terms of tissue distribution, highly expressed in flowers, and at very low levels in leaves.

It localises to the secreted. The protein resides in the extracellular space. It is found in the apoplast. Its function is as follows. Involved in the regulation of cell death induced by extracellular reactive oxygen species. Only the processed peptide, and not the full length GRI can bind in vivo to the extracellular domain of the receptor PRK5. The GRIp-induced cell death is superoxide and salicylic acid dependent. The protein is Protein GRIM REAPER of Arabidopsis thaliana (Mouse-ear cress).